A 363-amino-acid chain; its full sequence is MSAIYNFCAGPAMLPAAVMKKAQQELLDWNGQGVSVMEISHRSKEFIALTEQAESDLRELMQIPANYHVLFMHGGGRGQFSAVVNNFLGEQGKALYLVSGQWSSAALVEAQKLAGEAQIDSLNIVEKHNGLNAVVLPDLHKIDADYRYVHYCPNETVDGIEIFDELDSPWPIVADLSSTIMSREIDVSRYGLIYAGAQKNIGPSGLSIVIVRDDMLKLPSLPQSSIMDYRLAVEHDSMFNTPPTFAWYLAAEVFAWLRSTGGISSIAKINQQKAQMLYQCIDGNAFYRNGVVAANRSQMNVTFQLVNEALDSEFLKQAQIAGLVALKGHRIVGGMRASLYNAMPLDGVIALVKFMNEFAAKHS.

Arg42 provides a ligand contact to L-glutamate. Pyridoxal 5'-phosphate contacts are provided by residues 76–77 (GR), Trp102, Thr156, Asp175, and Gln198. Lys199 is modified (N6-(pyridoxal phosphate)lysine). Pyridoxal 5'-phosphate is bound at residue 240–241 (NT).

The protein belongs to the class-V pyridoxal-phosphate-dependent aminotransferase family. SerC subfamily. Homodimer. Requires pyridoxal 5'-phosphate as cofactor.

The protein resides in the cytoplasm. The enzyme catalyses O-phospho-L-serine + 2-oxoglutarate = 3-phosphooxypyruvate + L-glutamate. The catalysed reaction is 4-(phosphooxy)-L-threonine + 2-oxoglutarate = (R)-3-hydroxy-2-oxo-4-phosphooxybutanoate + L-glutamate. It functions in the pathway amino-acid biosynthesis; L-serine biosynthesis; L-serine from 3-phospho-D-glycerate: step 2/3. Its pathway is cofactor biosynthesis; pyridoxine 5'-phosphate biosynthesis; pyridoxine 5'-phosphate from D-erythrose 4-phosphate: step 3/5. Functionally, catalyzes the reversible conversion of 3-phosphohydroxypyruvate to phosphoserine and of 3-hydroxy-2-oxo-4-phosphonooxybutanoate to phosphohydroxythreonine. In Shewanella baltica (strain OS223), this protein is Phosphoserine aminotransferase.